Reading from the N-terminus, the 343-residue chain is UDP-3-O-acylglucosamine N-acyltransferase (343 aa).

H239 functions as the Proton acceptor in the catalytic mechanism.

The protein belongs to the transferase hexapeptide repeat family. LpxD subfamily. In terms of assembly, homotrimer.

It carries out the reaction a UDP-3-O-[(3R)-3-hydroxyacyl]-alpha-D-glucosamine + a (3R)-hydroxyacyl-[ACP] = a UDP-2-N,3-O-bis[(3R)-3-hydroxyacyl]-alpha-D-glucosamine + holo-[ACP] + H(+). The protein operates within bacterial outer membrane biogenesis; LPS lipid A biosynthesis. Functionally, catalyzes the N-acylation of UDP-3-O-acylglucosamine using 3-hydroxyacyl-ACP as the acyl donor. Is involved in the biosynthesis of lipid A, a phosphorylated glycolipid that anchors the lipopolysaccharide to the outer membrane of the cell. In Vibrio vulnificus (strain YJ016), this protein is UDP-3-O-acylglucosamine N-acyltransferase.